A 599-amino-acid polypeptide reads, in one-letter code: Elongation factor 4 (599 aa).

Residues 5–187 enclose the tr-type G domain; the sequence is SHIRNFSIIA…RLVHTIPAPE (183 aa). GTP contacts are provided by residues 17–22 and 134–137; these read DHGKST and NKMD.

It belongs to the TRAFAC class translation factor GTPase superfamily. Classic translation factor GTPase family. LepA subfamily.

The protein resides in the cell inner membrane. The enzyme catalyses GTP + H2O = GDP + phosphate + H(+). Functionally, required for accurate and efficient protein synthesis under certain stress conditions. May act as a fidelity factor of the translation reaction, by catalyzing a one-codon backward translocation of tRNAs on improperly translocated ribosomes. Back-translocation proceeds from a post-translocation (POST) complex to a pre-translocation (PRE) complex, thus giving elongation factor G a second chance to translocate the tRNAs correctly. Binds to ribosomes in a GTP-dependent manner. The sequence is that of Elongation factor 4 from Pseudomonas putida (strain ATCC 47054 / DSM 6125 / CFBP 8728 / NCIMB 11950 / KT2440).